We begin with the raw amino-acid sequence, 564 residues long: MAFKFNWSPLIADASFYTRAQDLLTAALNKSPKPPIIVGDITVTELNLGSIPPELEILEIGDLAEDRFRGIFKMSYTGDAFLTLKTRVQANPLNTYLITRPSFASPLPLAAATPLTIPLQITLSDFKLSGFVILVFSEQKGITLVFRNDPLESLKVSSTFDSIPFVRDFLQGEIEAQLRILFIDELPAIIHRLSLQLWDPEYRAEEIQNQMNTTLTPTKGPGHDPLVTPPQDPVDSLGNVLDESDIASLSLDSAAETHSLFSQKNLLSLATLTDSQRTLSLFTPSIQQVVYRAWSSPDQNDSSASVMSPISPPLSRTQSQTGGIFASIDNASTSSAQSRTPTGPTQSFSSYGLSLGASRHSRAHARRRKKRVVDLRSRPTTPSDSASVSVSDESTYTESASAPSVTSAPLQAIHEQPDDPVTPPLSPESDQSLPAIVEERRLSLSRSLPRRDLSSEIVRDRAEPSEPRNPFNTDDVIVTVGSVRPTPHQEASPPLGPTRQLSAAGLPFPHDSSTGSVVDQVFLDTLAGEVARRMRDEKLMAPNSCGTFCGHGLPEEPPPPAYGQ.

An SMP-LTD domain is found at 1–195; sequence MAFKFNWSPL…LPAIIHRLSL (195 aa). Composition is skewed to polar residues over residues 297–322 and 329–352; these read PDQNDSSASVMSPISPPLSRTQSQTG and DNASTSSAQSRTPTGPTQSFSSYG. Disordered regions lie at residues 297-408, 414-433, and 452-473; these read PDQN…VTSA, HEQPDDPVTPPLSPESDQSL, and DLSSEIVRDRAEPSEPRNPFNT. Residues 359-371 are compositionally biased toward basic residues; it reads RHSRAHARRRKKR. The span at 383 to 394 shows a compositional bias: low complexity; the sequence is SDSASVSVSDES. Residues 396 to 408 are compositionally biased toward polar residues; sequence YTESASAPSVTSA. Over residues 452-466 the composition is skewed to basic and acidic residues; the sequence is DLSSEIVRDRAEPSE.

This sequence belongs to the MDM34 family. In terms of assembly, component of the ER-mitochondria encounter structure (ERMES) or MDM complex, composed of mmm1, mdm10, mdm12 and mdm34.

The protein resides in the mitochondrion outer membrane. In terms of biological role, component of the ERMES/MDM complex, which serves as a molecular tether to connect the endoplasmic reticulum (ER) and mitochondria. Components of this complex are involved in the control of mitochondrial shape and protein biogenesis, and function in nonvesicular lipid trafficking between the ER and mitochondria. Mdm34 is required for the interaction of the ER-resident membrane protein mmm1 and the outer mitochondrial membrane-resident beta-barrel protein mdm10. The polypeptide is Mitochondrial distribution and morphology protein 34-1 (Penicillium rubens (strain ATCC 28089 / DSM 1075 / NRRL 1951 / Wisconsin 54-1255) (Penicillium chrysogenum)).